Consider the following 471-residue polypeptide: MAEAIEKVADKVADLVVDDKPAAVPESTSDHEDGDDNDDAVNEGEAVDGEKKKKKKKNKKKKKKGPAVQTEPPTVPIDRFFTSGIFPEGEICEHPHKTFKPKGTAVDPFADSEDEREAAEERAKDDAKHGSDDPLDFNRLRTTNEEKRYLDREQAAVHNEWRKGAEIHRVVRKYARDNIKAGMTMTSIAEMIEDSVRALSNEEDSLKGGQGFPTGVSLNHCAAHYTPNAGDKIVLKEDDVLKVDFGVHVNGKIIDSAFTHVQNDKWQGLLDAVKAATETGIREAGIDVRLGDIGEAIQETMESHEVEVDGKVYQVKSIRNLNGHNIAPYEIHGGKSVPIVKSADMTKMEEGETFAIETFGSTGRGYVVTDGECSHYAKNVGVGHVPLRVNKAKQLLATIDKNFGTLPFCRRYLDRLGEEKYLLALKNLVQSGVVQDYPPLVDQKGCQTAQYEHTIYLRPTCKEILSRGDDY.

Disordered stretches follow at residues 16-80 (VVDD…IDRF) and 92-139 (CEHP…DFNR). The span at 32-47 (EDGDDNDDAVNEGEAV) shows a compositional bias: acidic residues. A compositionally biased stretch (basic residues) spans 52 to 65 (KKKKKKNKKKKKKG). Positions 119–139 (AEERAKDDAKHGSDDPLDFNR) are enriched in basic and acidic residues. Residue H224 participates in substrate binding. A divalent metal cation-binding residues include D244, D255, and H324. H332 provides a ligand contact to substrate. The a divalent metal cation site is built by E357 and E452.

This sequence belongs to the peptidase M24A family. Methionine aminopeptidase eukaryotic type 2 subfamily. Co(2+) is required as a cofactor. Zn(2+) serves as cofactor. Requires Mn(2+) as cofactor. The cofactor is Fe(2+).

The protein localises to the cytoplasm. It catalyses the reaction Release of N-terminal amino acids, preferentially methionine, from peptides and arylamides.. Functionally, cotranslationally removes the N-terminal methionine from nascent proteins. The N-terminal methionine is often cleaved when the second residue in the primary sequence is small and uncharged (Met-Ala-, Cys, Gly, Pro, Ser, Thr, or Val). This is Methionine aminopeptidase 2 from Yarrowia lipolytica (strain CLIB 122 / E 150) (Yeast).